The chain runs to 265 residues: Hydroxyethylthiazole kinase 2 (265 aa).

Residue Met-39 coordinates substrate. Positions 115 and 168 each coordinate ATP. Substrate is bound at residue Gly-195.

Belongs to the Thz kinase family. Requires Mg(2+) as cofactor.

The catalysed reaction is 5-(2-hydroxyethyl)-4-methylthiazole + ATP = 4-methyl-5-(2-phosphooxyethyl)-thiazole + ADP + H(+). It functions in the pathway cofactor biosynthesis; thiamine diphosphate biosynthesis; 4-methyl-5-(2-phosphoethyl)-thiazole from 5-(2-hydroxyethyl)-4-methylthiazole: step 1/1. In terms of biological role, catalyzes the phosphorylation of the hydroxyl group of 4-methyl-5-beta-hydroxyethylthiazole (THZ). The chain is Hydroxyethylthiazole kinase 2 from Clostridium botulinum (strain Kyoto / Type A2).